We begin with the raw amino-acid sequence, 364 residues long: Spermidine/putrescine import ATP-binding protein PotA (364 aa).

Positions 6–236 (IEIRQIYKSY…PANLHVAMFI (231 aa)) constitute an ABC transporter domain. Position 38–45 (38–45 (GPSGCGKT)) interacts with ATP.

This sequence belongs to the ABC transporter superfamily. Spermidine/putrescine importer (TC 3.A.1.11.1) family. In terms of assembly, the complex is composed of two ATP-binding proteins (PotA), two transmembrane proteins (PotB and PotC) and a solute-binding protein (PotD).

Its subcellular location is the cell inner membrane. The enzyme catalyses ATP + H2O + polyamine-[polyamine-binding protein]Side 1 = ADP + phosphate + polyamineSide 2 + [polyamine-binding protein]Side 1.. Its function is as follows. Part of the ABC transporter complex PotABCD involved in spermidine/putrescine import. Responsible for energy coupling to the transport system. The chain is Spermidine/putrescine import ATP-binding protein PotA from Legionella pneumophila (strain Lens).